A 67-amino-acid polypeptide reads, in one-letter code: DNA-directed RNA polymerases I, II, and III subunit RPABC5 (67 aa).

4 residues coordinate Zn(2+): cysteine 7, cysteine 10, cysteine 44, and cysteine 45.

It belongs to the archaeal Rpo10/eukaryotic RPB10 RNA polymerase subunit family. Component of the RNA polymerase I (Pol I), RNA polymerase II (Pol II) and RNA polymerase III (Pol III) complexes consisting of at least 13, 12 and 17 subunits, respectively. Pol I complex consists of a ten-subunit catalytic core composed of POLR1A/RPA1, POLR1B/RPA2, POLR1C/RPAC1, POLR1D/RPAC2, POLR1H/RPA12, POLR2E/RPABC1, POLR2F/RPABC2, POLR2H/RPABC3, POLR2K/RPABC4 and POLR2L/RPABC5; a mobile stalk subunit POLR1F/RPA43 protruding from the core and additional subunits homologous to general transcription factors POLR1E/RPA49 and POLR1G/RPA34. Part of Pol I pre-initiation complex (PIC), in which Pol I core assembles with RRN3 and promoter-bound UTBF and SL1/TIF-IB complex. Pol II complex contains a ten-subunit catalytic core composed of POLR2A/RPB1, POLR2B/RPB2, POLR2C/RPB3, POLR2I/RPB9, POLR2J/RPB11, POLR2E/RPABC1, POLR2F/RPABC2, POLR2H/RPABC3, POLR2K/RPABC4 and POLR2L/RPABC5 and a mobile stalk composed of two subunits POLR2D/RPB4 and POLR2G/RPB7. Part of Pol II(G) complex, in which Pol II core associates with an additional subunit POLR2M; unlike conventional Pol II, Pol II(G) functions as a transcriptional repressor. Part of TBP-based Pol II pre-initiation complex (PIC), in which Pol II core assembles with general transcription factors and other specific initiation factors including GTF2E1, GTF2E2, GTF2F1, GTF2F2, TCEA1, ERCC2, ERCC3, GTF2H2, GTF2H3, GTF2H4, GTF2H5, GTF2A1, GTF2A2, GTF2B and TBP; this large multi-subunit PIC complex mediates DNA unwinding and targets Pol II core to the transcription start site where the first phosphodiester bond forms. Pol III complex consists of a ten-subunit catalytic core composed of POLR3A/RPC1, POLR3B/RPC2, POLR1C/RPAC1, POLR1D/RPAC2, POLR3K/RPC10, POLR2E/RPABC1, POLR2F/RPABC2, POLR2H/RPABC3, POLR2K/RPABC4 and POLR2L/RPABC5; a mobile stalk composed of two subunits POLR3H/RPC8 and CRCP/RPC9, protruding from the core and functioning primarily in transcription initiation; and additional subunits homologous to general transcription factors of the RNA polymerase II machinery, POLR3C/RPC3-POLR3F/RPC6-POLR3G/RPC7 heterotrimer required for transcription initiation and POLR3D/RPC4-POLR3E/RPC5 heterodimer involved in both transcription initiation and termination.

It is found in the nucleus. The protein resides in the nucleolus. Its function is as follows. DNA-dependent RNA polymerase catalyzes the transcription of DNA into RNA using the four ribonucleoside triphosphates as substrates. Common component of RNA polymerases I, II and III which synthesize ribosomal RNA precursors, mRNA precursors and many functional non-coding RNAs, and a small RNAs, such as 5S rRNA and tRNAs, respectively. The sequence is that of DNA-directed RNA polymerases I, II, and III subunit RPABC5 (POLR2L) from Bos taurus (Bovine).